Consider the following 100-residue polypeptide: NADH-quinone oxidoreductase subunit K (100 aa).

3 helical membrane-spanning segments follow: residues 2 to 22 (VPTT…MIGV), 29 to 49 (IMVF…LVAF), and 63 to 83 (FIVM…IVAI).

It belongs to the complex I subunit 4L family. NDH-1 is composed of 15 different subunits. Subunits NuoA, H, J, K, L, M, N constitute the membrane sector of the complex.

It is found in the cell membrane. It carries out the reaction a quinone + NADH + 5 H(+)(in) = a quinol + NAD(+) + 4 H(+)(out). In terms of biological role, NDH-1 shuttles electrons from NADH, via FMN and iron-sulfur (Fe-S) centers, to quinones in the respiratory chain. The immediate electron acceptor for the enzyme in this species is believed to be a menaquinone. Couples the redox reaction to proton translocation (for every two electrons transferred, four hydrogen ions are translocated across the cytoplasmic membrane), and thus conserves the redox energy in a proton gradient. The sequence is that of NADH-quinone oxidoreductase subunit K from Deinococcus deserti (strain DSM 17065 / CIP 109153 / LMG 22923 / VCD115).